The chain runs to 577 residues: MSETVTQTETDQRPATARSLGAEEKEAKSDEQFQQERTIKGFRWFIVIISILSSVTLYSLDNTIVADIQPQIINTFDELDKLPWLSVAFLVACVATNSIWSKIYSQLNAKWLYLFCVVLFEVGSAMCGAAPTINTLIGGRALAGLGGAGLYVGVMTLLSVNTSKRERPMYIGMTGLTWGVGTVLGPIVGGGFAVSKVGWRWSFYINRECRPSVQPIRPLTVPPVFFAAVAIPIYLFMLPSFDPRPGVSYKERLAQLDYLGTILMIGACVSGVMAINFGGQIYPWDSGQTISCFVVSGVLFIVFGLQQWYCIGTTKENRTFPCQFLARPAFIILFVQTASVATVFFVPIYFVPLFFQFTRNDSAIDAGVRLLPLVCFIVAAMILNGALMSKFGYYMPWYLVGGCLSLVGSVLMYTIKLGTSTANIYGYMIILGVGGGMYAQASFAVAQGKARPREIPVATGFISLAQLTGGTIALAIANSVFLEKASAGIMAVVPDASKETVQSAISGASSSFFQTLDPDVREAVLAAVTHAISQVYILPITGAAMSISLAIFMPREKLFVASDSGDRDGVTPLGAMG.

Residues 1 to 32 (MSETVTQTETDQRPATARSLGAEEKEAKSDEQ) form a disordered region. Residues 21-31 (GAEEKEAKSDE) show a composition bias toward basic and acidic residues. 8 helical membrane passes run 45 to 65 (FIVI…NTIV), 84 to 104 (WLSV…SKIY), 111 to 131 (WLYL…GAAP), 141 to 161 (ALAG…LSVN), 174 to 194 (TGLT…GFAV), 218 to 238 (PLTV…LFML), 259 to 279 (LGTI…NFGG), and 292 to 312 (CFVV…YCIG). N-linked (GlcNAc...) asparagine glycosylation occurs at N317. Residues 330 to 350 (FIILFVQTASVATVFFVPIYF) traverse the membrane as a helical segment. N-linked (GlcNAc...) asparagine glycosylation is present at N360. 5 helical membrane-spanning segments follow: residues 363-383 (AIDA…AMIL), 395-415 (MPWY…MYTI), 426-446 (GYMI…FAVA), 457-477 (VATG…LAIA), and 532-552 (ISQV…LAIF).

Belongs to the major facilitator superfamily. TCR/Tet family.

The protein localises to the membrane. Functionally, MFS-type transporter; part of the gene cluster that mediates the biosynthesis of pleosporalin A, ascomycone A, as well as a third cryptic naphthoquinone derived pigment, all responsible for the coloration of conidia. Seems not to be involved in pigment biosynthesis although its expression is regulated by the cluster-specific transcription factor pgmR. In Aspergillus terreus (strain NIH 2624 / FGSC A1156), this protein is MFS-type transporter pgmG.